The chain runs to 174 residues: Gamma-crystallin C (174 aa).

Beta/gamma crystallin 'Greek key' domains are found at residues 2 to 40 and 41 to 83; these read GKIT…RVDS and GCWM…CLIS. Cys-23 is subject to S-methylcysteine. The interval 84–87 is connecting peptide; that stretch reads DTSS. 2 Beta/gamma crystallin 'Greek key' domains span residues 88-128 and 129-171; these read HRLR…HVLE and GCWV…RRVV.

This sequence belongs to the beta/gamma-crystallin family.

Crystallins are the dominant structural components of the vertebrate eye lens. In Bos taurus (Bovine), this protein is Gamma-crystallin C (CRYGC).